A 309-amino-acid chain; its full sequence is tRNA dimethylallyltransferase (309 aa).

9–16 contacts ATP; that stretch reads GPTAVGKT. 11-16 provides a ligand contact to substrate; sequence TAVGKT. The tract at residues 34–37 is interaction with substrate tRNA; the sequence is DSMQ.

The protein belongs to the IPP transferase family. Monomer. It depends on Mg(2+) as a cofactor.

It catalyses the reaction adenosine(37) in tRNA + dimethylallyl diphosphate = N(6)-dimethylallyladenosine(37) in tRNA + diphosphate. Its function is as follows. Catalyzes the transfer of a dimethylallyl group onto the adenine at position 37 in tRNAs that read codons beginning with uridine, leading to the formation of N6-(dimethylallyl)adenosine (i(6)A). This is tRNA dimethylallyltransferase from Clostridium acetobutylicum (strain ATCC 824 / DSM 792 / JCM 1419 / IAM 19013 / LMG 5710 / NBRC 13948 / NRRL B-527 / VKM B-1787 / 2291 / W).